The sequence spans 200 residues: MARYTGPAWKLSRRLGISLSGTGKELEKRPYAPGPHGPNQRKKLSEYGLQLQEKQKLRHMYGMTERQFRRTFDQAGKMPGKHGENFMILLEARLDNLVYRMGLARTRRAARQLVNHGHITVDGARVDIPSYRVKPNQTISVREKSNSLVVVKEAIEVNNFVPEYLTFDADKLEATYTRHAERSELAAEINEALIVEFYSR.

The segment at 22–42 (TGKELEKRPYAPGPHGPNQRK) is disordered. The S4 RNA-binding domain occupies 92 to 152 (ARLDNLVYRM…EKSNSLVVVK (61 aa)).

Belongs to the universal ribosomal protein uS4 family. Part of the 30S ribosomal subunit. Contacts protein S5. The interaction surface between S4 and S5 is involved in control of translational fidelity.

In terms of biological role, one of the primary rRNA binding proteins, it binds directly to 16S rRNA where it nucleates assembly of the body of the 30S subunit. Functionally, with S5 and S12 plays an important role in translational accuracy. This is Small ribosomal subunit protein uS4 from Bacillus mycoides (strain KBAB4) (Bacillus weihenstephanensis).